A 232-amino-acid chain; its full sequence is Ubiquinone biosynthesis O-methyltransferase (232 aa).

S-adenosyl-L-methionine-binding residues include Arg36, Gly55, Asp76, and Leu120.

It belongs to the methyltransferase superfamily. UbiG/COQ3 family.

It catalyses the reaction a 3-demethylubiquinol + S-adenosyl-L-methionine = a ubiquinol + S-adenosyl-L-homocysteine + H(+). The enzyme catalyses a 3-(all-trans-polyprenyl)benzene-1,2-diol + S-adenosyl-L-methionine = a 2-methoxy-6-(all-trans-polyprenyl)phenol + S-adenosyl-L-homocysteine + H(+). The protein operates within cofactor biosynthesis; ubiquinone biosynthesis. Its function is as follows. O-methyltransferase that catalyzes the 2 O-methylation steps in the ubiquinone biosynthetic pathway. The sequence is that of Ubiquinone biosynthesis O-methyltransferase from Pseudomonas fluorescens (strain Pf0-1).